We begin with the raw amino-acid sequence, 2113 residues long: Unconventional myosin-VIIb (2113 aa).

The Myosin motor domain maps to 65 to 760 (QGVDDMIRLG…QDTVLEIRRS (696 aa)). 158–165 (GESGAGKT) is a binding site for ATP. Positions 637–659 (LDQLMRILTNCQPYFVRCIKPNE) are actin-binding. IQ domains are found at residues 745 to 765 (IFLKDHQDTVLEIRRSQALDG), 763 to 792 (LDGAAIRIQRVLRGHKYRKEFLRQRRAAVT), 786 to 815 (QRRAAVTLQAGWRGYSQRKNFKLILVGFER), 809 to 838 (ILVGFERLQAIARSHLLMRQFQAMRQRIVQ), 832 to 861 (MRQRIVQLQARCRGYLVRQQVQAKRRAVVI), and 855 to 884 (KRRAVVIIQAHARGMVVRKSYWQQKSTGPQ). Ser-904 carries the post-translational modification Phosphoserine. The interval 962–1578 (EEEVDSLAEY…STQLLSLLAM (617 aa)) is mediates interaction with ANKS4B. The MyTH4 1 domain maps to 989–1189 (HIQKPLRYPL…PTWLELQAVK (201 aa)). An FERM 1 domain is found at 1194–1503 (IPIQVILATG…GGLKERSVFA (310 aa)). Thr-1339 carries the phosphothreonine modification. Position 1368 is a phosphoserine (Ser-1368). A mediates interaction with CDHR2, CDHR5 and USH1C region spans residues 1497-2113 (KERSVFAMAL…GFRAPAPANP (617 aa)). In terms of domain architecture, SH3 spans 1498-1564 (ERSVFAMALQ…PTACLYTIPS (67 aa)). MyTH4 domains follow at residues 1641-1790 (YSPE…KAAE) and 1790-1896 (EQNV…LNVT). Ser-1642 is subject to Phosphoserine. In terms of domain architecture, FERM 2 spans 1796 to 2099 (LHHEVYLPND…SYVQQLLNTV (304 aa)).

The protein belongs to the TRAFAC class myosin-kinesin ATPase superfamily. Myosin family. In terms of assembly, part of the IMAC/intermicrovillar adhesion complex/intermicrovillar tip-link complex composed of ANKS4B, MYO7B, USH1C, CDHR2 and CDHR5. Interacts with CDHR2. Interacts with CDHR5. Interacts with USH1C. Interacts with ANKS4B; requires initial interaction with USH1C. Interacts with CALML4; the interaction mediates the association of CALML4 with the IMAC/intermicrovillar adhesion complex. In terms of tissue distribution, expressed primarily in kidney and intestine. Detected in proximal tubule cells of the kidney and enterocytes of the intestine, specifically the distal tips of apical microvilli on these transporting epithelial cells (at protein level).

Its subcellular location is the cytoplasm. The protein resides in the cytoskeleton. It is found in the cell projection. It localises to the microvillus. Its function is as follows. Myosins are actin-based motor molecules with ATPase activity. Their highly divergent tails are presumed to bind to membranous compartments, which would be moved relative to actin filaments. As part of the intermicrovillar adhesion complex/IMAC plays a role in epithelial brush border differentiation, controlling microvilli organization and length. May link the complex to the actin core bundle of microvilli. The polypeptide is Unconventional myosin-VIIb (Myo7b) (Mus musculus (Mouse)).